The chain runs to 2098 residues: Non-reducing polyketide synthase crz7 (2098 aa).

Residues 8–243 form the Starter acyltransferase (SAT) domain; it reads ILFGDQTVDP…IKLPITAAFH (236 aa). Residues 364–789 form the Ketosynthase family 3 (KS3) domain; that stretch reads SSDIAIIGFA…GGNTSLLLED (426 aa). Catalysis depends on for beta-ketoacyl synthase activity residues Cys-532, His-667, and His-706. One can recognise a Malonyl-CoA:ACP transacylase (MAT) domain in the interval 887–1211; it reads IFLFTGQGSQ…IANAYNSGVK (325 aa). Positions 1270–1404 are N-terminal hotdog fold; the sequence is TCLQGVENET…CTVMYGDGQQ (135 aa). A PKS/mFAS DH domain is found at 1270–1578; sequence TCLQGVENET…FQQMKRTTLQ (309 aa). The Proton acceptor; for dehydratase activity role is filled by His-1305. The tract at residues 1431-1578 is C-terminal hotdog fold; that stretch reads IHRMLKEMIY…FQQMKRTTLQ (148 aa). Asp-1491 functions as the Proton donor; for dehydratase activity in the catalytic mechanism. The Carrier 1 domain maps to 1613 to 1690; sequence QSPSAGFSKV…ELRAFFLDKM (78 aa). The residue at position 1650 (Ser-1650) is an O-(pantetheine 4'-phosphoryl)serine. A disordered region spans residues 1693–1725; the sequence is PQATANDDDSDDSSEDEDPGYSRSQSNSTISTP. The span at 1698-1711 shows a compositional bias: acidic residues; the sequence is NDDDSDDSSEDEDP. The segment covering 1714–1724 has biased composition (polar residues); the sequence is SRSQSNSTIST. Residues 1725-1802 form the Carrier 2 domain; it reads PEEPDVVSIL…DVQKALGPTS (78 aa). Ser-1762 carries the O-(pantetheine 4'-phosphoryl)serine modification. The interval 1844 to 2080 is thioesterase (TE) domain; it reads LFLLPDGAGS…VSGNHFSIMF (237 aa).

Requires pantetheine 4'-phosphate as cofactor.

Its pathway is secondary metabolite biosynthesis. Non-reducing polyketide synthase; part of the gene cluster that mediates the biosynthesis of the red pigment cristazarin, a naphthazarin derivative. The polyketide product of crz7 is likely 2-acetyl-1,3,6,8-tetrahydoxynaphthalene (AT4HN) from which a probable biosynthetic route of cristazarin can be deduced. The presence of two O-methyltransferases (crz1 and crz2), an enoyl reductase (crz5), an oxidase (crz8), and a short-chain dehydrogenase (crz9) encoded in the cristazarin biosynthetic cluster is consistent with methylation of a hydroxyl group, addition of two hydroxyl groups to the naphthalene core ring, and reduction of the acetyl side chain. This chain is Non-reducing polyketide synthase crz7, found in Cladonia metacorallifera (Lichen-forming fungus).